A 349-amino-acid polypeptide reads, in one-letter code: Anthranilate phosphoribosyltransferase (349 aa).

5-phospho-alpha-D-ribose 1-diphosphate is bound by residues G82, 85–86 (GD), 92–95 (NVST), 110–118 (KHGNRAVSG), and S122. An anthranilate-binding site is contributed by G82. Residue S94 participates in Mg(2+) binding. N113 is a binding site for anthranilate. Residue R168 coordinates anthranilate. Mg(2+) is bound by residues D227 and E228.

It belongs to the anthranilate phosphoribosyltransferase family. In terms of assembly, homodimer. Mg(2+) serves as cofactor.

The catalysed reaction is N-(5-phospho-beta-D-ribosyl)anthranilate + diphosphate = 5-phospho-alpha-D-ribose 1-diphosphate + anthranilate. It functions in the pathway amino-acid biosynthesis; L-tryptophan biosynthesis; L-tryptophan from chorismate: step 2/5. Functionally, catalyzes the transfer of the phosphoribosyl group of 5-phosphorylribose-1-pyrophosphate (PRPP) to anthranilate to yield N-(5'-phosphoribosyl)-anthranilate (PRA). The protein is Anthranilate phosphoribosyltransferase of Pseudomonas putida (strain ATCC 47054 / DSM 6125 / CFBP 8728 / NCIMB 11950 / KT2440).